The sequence spans 53 residues: MAVPKRRVSHTRAAKRRTHYKLTLPMPVKDADGTWRMPHHMNMTTGEYKTTKA.

The span at methionine 1–tyrosine 20 shows a compositional bias: basic residues. Residues methionine 1 to alanine 53 form a disordered region. Residues asparagine 42–alanine 53 show a composition bias toward polar residues.

It belongs to the bacterial ribosomal protein bL32 family.

This chain is Large ribosomal subunit protein bL32, found in Sulfurovum sp. (strain NBC37-1).